The chain runs to 95 residues: ESAT-6-like protein EsxA (95 aa).

It belongs to the WXG100 family. ESAT-6 subfamily. As to quaternary structure, forms a tight 1:1 complex with EsxB. An artificial EsxA-EsxB heterodimer interacts with EspA.

Its subcellular location is the secreted. In terms of biological role, an exported protein. Unlike its M.tuberculosis counterpart has poor pore forming ability in artificial liposomes, does not undergo conformational change at acidic pH. Mutation of 2 residues to those found in M.tuberculosis (25-TA-26 to IH) alters the properties of this protein so that it inserts into liposomes at acidic pH, forming pores, like its M.tuberculosis counterpart. This Mycolicibacterium smegmatis (strain ATCC 700084 / mc(2)155) (Mycobacterium smegmatis) protein is ESAT-6-like protein EsxA.